The sequence spans 207 residues: Proteasome subunit beta (207 aa).

Residues Met1–Gly7 constitute a propeptide, removed in mature form; by autocatalysis. Thr8 functions as the Nucleophile in the catalytic mechanism.

This sequence belongs to the peptidase T1B family. The 20S proteasome core is composed of 14 alpha and 14 beta subunits that assemble into four stacked heptameric rings, resulting in a barrel-shaped structure. The two inner rings, each composed of seven catalytic beta subunits, are sandwiched by two outer rings, each composed of seven alpha subunits. The catalytic chamber with the active sites is on the inside of the barrel. Has a gated structure, the ends of the cylinder being occluded by the N-termini of the alpha-subunits. Is capped at one or both ends by the proteasome regulatory ATPase, PAN.

It localises to the cytoplasm. The enzyme catalyses Cleavage of peptide bonds with very broad specificity.. The formation of the proteasomal ATPase PAN-20S proteasome complex, via the docking of the C-termini of PAN into the intersubunit pockets in the alpha-rings, triggers opening of the gate for substrate entry. Interconversion between the open-gate and close-gate conformations leads to a dynamic regulation of the 20S proteasome proteolysis activity. Functionally, component of the proteasome core, a large protease complex with broad specificity involved in protein degradation. The polypeptide is Proteasome subunit beta (Methanothrix thermoacetophila (strain DSM 6194 / JCM 14653 / NBRC 101360 / PT) (Methanosaeta thermophila)).